The sequence spans 133 residues: Lanmodulin (133 aa).

An N-terminal signal peptide occupies residues 1-21 (MAFRLSSAVLLAALVAAPAYA). Residues Asp35, Asp37, Asp39, Thr41, Glu46, Asp59, Asp61, Asp63, Thr65, Glu70, Asp84, Asp86, Asp88, Thr90, Glu95, Asn108, Asp110, Asp112, Thr114, and Glu119 each contribute to the Nd(3+) site. EF-hand domains lie at 35-46 (DPDKDGTIDLKE), 59-70 (DPDKDGTLDAKE), 84-95 (DPDNDGTLDKKE), and 108-119 (NPDNDGTIDARE).

Monomer.

It is found in the periplasm. Its function is as follows. High-affinity lanthanide (Ln)-binding protein. Shows 100 million-fold selectivity for La(3+) over Ca(2+). Binds 3 equiv of Ln(3+) with picomolar affinity and a fourth with approximately micromolar affinity. May be involved in receiving and then transporting lanthanides (such as La(3+), Nd(3+) and Sm(3+)) to a specific periplasmic destination. In Methylorubrum extorquens (strain ATCC 14718 / DSM 1338 / JCM 2805 / NCIMB 9133 / AM1) (Methylobacterium extorquens), this protein is Lanmodulin.